The chain runs to 221 residues: Eukaryotic translation initiation factor 3 subunit K (221 aa).

A PCI domain is found at 46 to 215 (YDLEANLACL…EKIEFDNLAP (170 aa)).

It belongs to the eIF-3 subunit K family. In terms of assembly, component of the eukaryotic translation initiation factor 3 (eIF-3) complex.

It is found in the cytoplasm. Its function is as follows. Component of the eukaryotic translation initiation factor 3 (eIF-3) complex, which is involved in protein synthesis of a specialized repertoire of mRNAs and, together with other initiation factors, stimulates binding of mRNA and methionyl-tRNAi to the 40S ribosome. The eIF-3 complex specifically targets and initiates translation of a subset of mRNAs involved in cell proliferation. The sequence is that of Eukaryotic translation initiation factor 3 subunit K from Anopheles gambiae (African malaria mosquito).